The sequence spans 936 residues: Aconitate hydratase A (936 aa).

Residues 401-449 are disordered; sequence VTPDFDAEGPATENTSAQTAGTPASAADAKGNIPSAAAGAEGRPSNPVT. A compositionally biased stretch (polar residues) spans 412 to 422; that stretch reads TENTSAQTAGT. [4Fe-4S] cluster-binding residues include C472, C538, and C541.

Belongs to the aconitase/IPM isomerase family. Monomer. Requires [4Fe-4S] cluster as cofactor.

It carries out the reaction citrate = D-threo-isocitrate. The enzyme catalyses (2S,3R)-3-hydroxybutane-1,2,3-tricarboxylate = 2-methyl-cis-aconitate + H2O. It participates in carbohydrate metabolism; tricarboxylic acid cycle; isocitrate from oxaloacetate: step 2/2. Its pathway is organic acid metabolism; propanoate degradation. In terms of biological role, involved in the catabolism of short chain fatty acids (SCFA) via the tricarboxylic acid (TCA)(acetyl degradation route) and probably via the 2-methylcitrate cycle I (propionate degradation route). Catalyzes the reversible isomerization of citrate to isocitrate via cis-aconitate. Could catalyze the hydration of 2-methyl-cis-aconitate to yield (2R,3S)-2-methylisocitrate. The apo form of AcnA functions as a RNA-binding regulatory protein. This is Aconitate hydratase A (acn) from Corynebacterium jeikeium (strain K411).